We begin with the raw amino-acid sequence, 377 residues long: Nitric oxide reductase FlRd-NAD(+) reductase (377 aa).

It belongs to the FAD-dependent oxidoreductase family. Requires FAD as cofactor.

Its subcellular location is the cytoplasm. It carries out the reaction 2 reduced [nitric oxide reductase rubredoxin domain] + NAD(+) + H(+) = 2 oxidized [nitric oxide reductase rubredoxin domain] + NADH. It participates in nitrogen metabolism; nitric oxide reduction. In terms of biological role, one of at least two accessory proteins for anaerobic nitric oxide (NO) reductase. Reduces the rubredoxin moiety of NO reductase. The protein is Nitric oxide reductase FlRd-NAD(+) reductase of Escherichia coli O139:H28 (strain E24377A / ETEC).